The following is a 158-amino-acid chain: MLP-like protein 43 (158 aa).

Ala2 is subject to N-acetylalanine.

Belongs to the MLP family.

This is MLP-like protein 43 (MLP43) from Arabidopsis thaliana (Mouse-ear cress).